The chain runs to 129 residues: Large ribosomal subunit protein bL20 (129 aa).

Belongs to the bacterial ribosomal protein bL20 family.

Functionally, binds directly to 23S ribosomal RNA and is necessary for the in vitro assembly process of the 50S ribosomal subunit. It is not involved in the protein synthesizing functions of that subunit. The chain is Large ribosomal subunit protein bL20 from Kineococcus radiotolerans (strain ATCC BAA-149 / DSM 14245 / SRS30216).